We begin with the raw amino-acid sequence, 189 residues long: Threonylcarbamoyl-AMP synthase (189 aa).

The YrdC-like domain occupies 7–189 (NFTVKGLTEQ…DAITGKIIRK (183 aa)).

Belongs to the SUA5 family. TsaC subfamily.

It is found in the cytoplasm. The catalysed reaction is L-threonine + hydrogencarbonate + ATP = L-threonylcarbamoyladenylate + diphosphate + H2O. Its function is as follows. Required for the formation of a threonylcarbamoyl group on adenosine at position 37 (t(6)A37) in tRNAs that read codons beginning with adenine. Catalyzes the conversion of L-threonine, HCO(3)(-)/CO(2) and ATP to give threonylcarbamoyl-AMP (TC-AMP) as the acyladenylate intermediate, with the release of diphosphate. The polypeptide is Threonylcarbamoyl-AMP synthase (Blochmanniella floridana).